We begin with the raw amino-acid sequence, 323 residues long: tRNA dimethylallyltransferase (323 aa).

12–19 (GPTAAGKT) serves as a coordination point for ATP. 14–19 (TAAGKT) is a substrate binding site. 2 interaction with substrate tRNA regions span residues 37–40 (DSAL) and 161–165 (QRLIR).

It belongs to the IPP transferase family. Monomer. Mg(2+) serves as cofactor.

The catalysed reaction is adenosine(37) in tRNA + dimethylallyl diphosphate = N(6)-dimethylallyladenosine(37) in tRNA + diphosphate. Catalyzes the transfer of a dimethylallyl group onto the adenine at position 37 in tRNAs that read codons beginning with uridine, leading to the formation of N6-(dimethylallyl)adenosine (i(6)A). The protein is tRNA dimethylallyltransferase of Pseudomonas putida (strain ATCC 47054 / DSM 6125 / CFBP 8728 / NCIMB 11950 / KT2440).